Consider the following 274-residue polypeptide: Orotidine 5'-phosphate decarboxylase (274 aa).

Over residues 1–15 (MSAGRRSSGGRSAAA) the composition is skewed to low complexity. The tract at residues 1–21 (MSAGRRSSGGRSAAAPRFTPP) is disordered. Substrate is bound by residues Asp-32, Lys-54, 99 to 108 (DLKLHDIPAT), Thr-154, Arg-215, Gln-224, Gly-244, and Arg-245. The active-site Proton donor is Lys-101.

Belongs to the OMP decarboxylase family. Type 1 subfamily. As to quaternary structure, homodimer.

The enzyme catalyses orotidine 5'-phosphate + H(+) = UMP + CO2. Its pathway is pyrimidine metabolism; UMP biosynthesis via de novo pathway; UMP from orotate: step 2/2. Catalyzes the decarboxylation of orotidine 5'-monophosphate (OMP) to uridine 5'-monophosphate (UMP). The polypeptide is Orotidine 5'-phosphate decarboxylase (Frankia casuarinae (strain DSM 45818 / CECT 9043 / HFP020203 / CcI3)).